A 210-amino-acid polypeptide reads, in one-letter code: Ribosomal RNA small subunit methyltransferase G (210 aa).

S-adenosyl-L-methionine is bound by residues Gly77, Phe82, Glu100–Ser102, Val128–Glu129, and Arg141.

Belongs to the methyltransferase superfamily. RNA methyltransferase RsmG family.

Its subcellular location is the cytoplasm. Functionally, specifically methylates the N7 position of a guanine in 16S rRNA. This Borrelia recurrentis (strain A1) protein is Ribosomal RNA small subunit methyltransferase G.